A 511-amino-acid polypeptide reads, in one-letter code: Maturase K (511 aa).

The protein belongs to the intron maturase 2 family. MatK subfamily.

The protein resides in the plastid. It is found in the chloroplast. Its function is as follows. Usually encoded in the trnK tRNA gene intron. Probably assists in splicing its own and other chloroplast group II introns. The protein is Maturase K of Bromus inermis (Smooth brome grass).